The sequence spans 249 residues: Methyltransferase 1 (249 aa).

Belongs to the FkbM methyltransferase family.

Its pathway is secondary metabolite biosynthesis. In terms of biological role, methyltransferase; part of the pathway that mediates the biosynthesis of tenellin-type 2-pyridones, iron-chelating compounds involved in iron stress tolerance, competition with the natural competitor fungus Metarhizium robertsii and insect hosts infection. Methylates pyridovericin-N-O-(beta-D-glucopyranoside) produced by the UDP-glucosyltransferase GT1 to yield pyridovericin-N-O-(4-O-methyl-beta-D-glucopyranoside) (PMGP). The pathway begins with the assembly of the polyketide-amino acid backbone by the hybrid PKS-NRPS tenS with the help of the enoyl reductase tenC. These enzymes catalyze the synthesis of the pyrrolidine-2-dione intermediates pretellinin A, 11-hydropretellenin A, 12-hydropretellenin A, 13-hydropretellenin A, 14-hydropretellenin A, 12-oxopretellenin A and prototellinin D. The cytochrome P450 monooxygenase tenA then catalyzes an oxidative ring expansion of pretenellin A and 14-hydropretellenin A to form the 2-pyridone core, leading to pretenellin B and pyridovericin, respectively. The cytochrome P450 monooxygenase tenB is then required for the selective N-hydroxylation of the 2-pyridone nitrogen of yield tellinin and 15-hydroxytellenin (15-HT), respectively. The UDP-glucosyltransferase GT1 and the methyltransferase MT1, located outside the tenS gene cluster, contribute to the stepwise glycosylation and methylation of 15-HT to obtain the glycoside pyridovericin-N-O-(4-O-methyl-beta-D-glucopyranoside) (PMGP). Additional related compounds such as 1-O-methyl-15-HT, (8Z)-1-O-methyl-15-HT, and O-methyltenellin A are also produced but the enzymes involved in their biosynthesis have still to be determined. In Beauveria bassiana (strain ARSEF 2860) (White muscardine disease fungus), this protein is Methyltransferase 1.